Consider the following 35-residue polypeptide: Photosystem II reaction center protein T (35 aa).

The helical transmembrane segment at 3 to 23 threads the bilayer; it reads ALVYTFLLVSTLGIIFFAIFF.

The protein belongs to the PsbT family. In terms of assembly, PSII is composed of 1 copy each of membrane proteins PsbA, PsbB, PsbC, PsbD, PsbE, PsbF, PsbH, PsbI, PsbJ, PsbK, PsbL, PsbM, PsbT, PsbY, PsbZ, Psb30/Ycf12, at least 3 peripheral proteins of the oxygen-evolving complex and a large number of cofactors. It forms dimeric complexes.

It is found in the plastid. Its subcellular location is the chloroplast thylakoid membrane. Functionally, found at the monomer-monomer interface of the photosystem II (PS II) dimer, plays a role in assembly and dimerization of PSII. PSII is a light-driven water plastoquinone oxidoreductase, using light energy to abstract electrons from H(2)O, generating a proton gradient subsequently used for ATP formation. This Pinus thunbergii (Japanese black pine) protein is Photosystem II reaction center protein T.